The sequence spans 486 residues: uncharacterized protein (486 aa).

Residues 18-38 (TLLQLFVFTVICVFVLSGLAI) form a helical membrane-spanning segment. Over residues 62-79 (DRQKQMEKQQDSGEKRSF) the composition is skewed to basic and acidic residues. Disordered regions lie at residues 62–82 (DRQK…FEST) and 117–147 (IESS…GPQM). Residues 119-132 (SSSSSDSSSSSSSS) are compositionally biased toward low complexity. The next 3 helical transmembrane spans lie at 324-344 (VVYL…MMSI), 365-385 (IGQF…LASV), and 451-471 (MLIL…LPSI).

Belongs to the ABC-4 integral membrane protein family.

Its subcellular location is the cell membrane. This is an uncharacterized protein from Bacillus subtilis (strain 168).